We begin with the raw amino-acid sequence, 393 residues long: NAD(P)H-quinone oxidoreductase subunit H, chloroplastic (393 aa).

The protein belongs to the complex I 49 kDa subunit family. In terms of assembly, NDH is composed of at least 16 different subunits, 5 of which are encoded in the nucleus.

The protein resides in the plastid. It is found in the chloroplast thylakoid membrane. It catalyses the reaction a plastoquinone + NADH + (n+1) H(+)(in) = a plastoquinol + NAD(+) + n H(+)(out). It carries out the reaction a plastoquinone + NADPH + (n+1) H(+)(in) = a plastoquinol + NADP(+) + n H(+)(out). Functionally, NDH shuttles electrons from NAD(P)H:plastoquinone, via FMN and iron-sulfur (Fe-S) centers, to quinones in the photosynthetic chain and possibly in a chloroplast respiratory chain. The immediate electron acceptor for the enzyme in this species is believed to be plastoquinone. Couples the redox reaction to proton translocation, and thus conserves the redox energy in a proton gradient. This is NAD(P)H-quinone oxidoreductase subunit H, chloroplastic from Cucumis sativus (Cucumber).